The sequence spans 537 residues: uncharacterized protein (537 aa).

A signal peptide spans Met1–Gly15. 2 helical membrane-spanning segments follow: residues Val459–Phe479 and Val490–Thr510.

The protein resides in the host membrane. This is an uncharacterized protein from Citrus sinensis (Sweet orange).